Consider the following 121-residue polypeptide: Large ribosomal subunit protein bL19 (121 aa).

This sequence belongs to the bacterial ribosomal protein bL19 family.

This protein is located at the 30S-50S ribosomal subunit interface and may play a role in the structure and function of the aminoacyl-tRNA binding site. The sequence is that of Large ribosomal subunit protein bL19 from Symbiobacterium thermophilum (strain DSM 24528 / JCM 14929 / IAM 14863 / T).